The following is a 404-amino-acid chain: Probable tRNA sulfurtransferase (404 aa).

Residues 60–165 form the THUMP domain; it reads HEVAESLKEI…DEAAYISYEN (106 aa). Residues 183–184, 208–209, R265, G287, and Q296 contribute to the ATP site; these read ML and HF.

This sequence belongs to the ThiI family.

Its subcellular location is the cytoplasm. It carries out the reaction [ThiI sulfur-carrier protein]-S-sulfanyl-L-cysteine + a uridine in tRNA + 2 reduced [2Fe-2S]-[ferredoxin] + ATP + H(+) = [ThiI sulfur-carrier protein]-L-cysteine + a 4-thiouridine in tRNA + 2 oxidized [2Fe-2S]-[ferredoxin] + AMP + diphosphate. The enzyme catalyses [ThiS sulfur-carrier protein]-C-terminal Gly-Gly-AMP + S-sulfanyl-L-cysteinyl-[cysteine desulfurase] + AH2 = [ThiS sulfur-carrier protein]-C-terminal-Gly-aminoethanethioate + L-cysteinyl-[cysteine desulfurase] + A + AMP + 2 H(+). Its pathway is cofactor biosynthesis; thiamine diphosphate biosynthesis. Functionally, catalyzes the ATP-dependent transfer of a sulfur to tRNA to produce 4-thiouridine in position 8 of tRNAs, which functions as a near-UV photosensor. Also catalyzes the transfer of sulfur to the sulfur carrier protein ThiS, forming ThiS-thiocarboxylate. This is a step in the synthesis of thiazole, in the thiamine biosynthesis pathway. The sulfur is donated as persulfide by IscS. This is Probable tRNA sulfurtransferase from Streptococcus agalactiae serotype Ia (strain ATCC 27591 / A909 / CDC SS700).